The chain runs to 147 residues: Hemoglobin subunit epsilon (147 aa).

Residues 3-147 form the Globin domain; that stretch reads HLTAEEKSSV…VATALAHKYH (145 aa). Serine 14 and serine 51 each carry phosphoserine. Residues histidine 64 and histidine 93 each contribute to the heme b site.

The protein belongs to the globin family. In terms of assembly, heterotetramer of two alpha chains and two epsilon chains in early embryonic hemoglobin Gower-2; two zeta chains and two epsilon chains in early embryonic hemoglobin Gower-1. Red blood cells.

Functionally, the epsilon chain is a beta-type chain of early mammalian embryonic hemoglobin. The chain is Hemoglobin subunit epsilon (HBE1) from Carlito syrichta (Philippine tarsier).